We begin with the raw amino-acid sequence, 172 residues long: Type IV secretion system putative outer membrane lipoprotein BRA0058/BS1330_II0058 (172 aa).

Residues 1-15 (MRTLVMVACAVSLAA) form the signal peptide. The N-palmitoyl cysteine moiety is linked to residue Cys-16. A lipid anchor (S-diacylglycerol cysteine) is attached at Cys-16. Residues 58 to 172 (WPARPPKQTV…RRVDIEILRK (115 aa)) enclose the OmpA-like domain.

The protein resides in the cell outer membrane. In terms of biological role, the VirB system could be required for the establishment of the replication niche in the host. In Brucella suis biovar 1 (strain 1330), this protein is Type IV secretion system putative outer membrane lipoprotein BRA0058/BS1330_II0058.